A 362-amino-acid polypeptide reads, in one-letter code: MKVVLVLYDAGKHAQDEERLYGCTENALGIRDWLEKQGHDVVVTSDKEGQNSVLEKNISDADVIISTPFHPAYITKERIDKAKKLKLLVVAGVGSDHIDLDYINQSGRDISVLEVTGSNVVSVAEHVVMTMLVLVRNFVPAHEQIISGGWNVAEIAKDSFDIEGKVIATIGAGRIGYRVLERLVAFNPKELLYYDYQSLSKEAEEKVGARRVHDIKELVAQADIVTINCPLHAGSKGLVNAELLKHFKKGAWLVNTARGAICVAEDVAAAVKSGQLRGYGGDVWFPQPAPKDHPWRSMANKYGAGNAMTPHYSGSVIDAQVRYAQGTKNILESFFTQKFDYRPQDIILLNGKYKTKSYGADK.

Residues Val93 and Asn119 each contribute to the substrate site. NAD(+)-binding positions include 174–175 (RI), Asp195, 230–234 (PLHAG), Thr256, Asp282, 311–314 (HYSG), and Ser357.

The protein belongs to the D-isomer specific 2-hydroxyacid dehydrogenase family. FDH subfamily. In terms of assembly, homodimer.

Its subcellular location is the cytoplasm. The catalysed reaction is formate + NAD(+) = CO2 + NADH. Its function is as follows. Catalyzes the NAD(+)-dependent oxidation of formate to carbon dioxide. Formate oxidation is the final step in the methanol oxidation pathway in methylotrophic microorganisms. Has a role in the detoxification of exogenous formate in non-methylotrophic organisms. In Pichia angusta (Yeast), this protein is Formate dehydrogenase.